The primary structure comprises 2142 residues: U5 small nuclear ribonucleoprotein 200 kDa helicase (2142 aa).

Disordered stretches follow at residues M52–R74, E211–G234, and R366–A396. Basic and acidic residues predominate over residues D369–A391. The Helicase ATP-binding 1 domain maps to K490–L673. A503–T510 contacts ATP. Positions D615–H618 match the DEIH box motif. Residues S684 to V917 form the Helicase C-terminal 1 domain. The 306-residue stretch at V981–F1286 folds into the SEC63 1 domain. The Helicase ATP-binding 2 domain maps to N1337–F1511. A1350–M1357 contributes to the ATP binding site. The DELQ box signature appears at D1453 to Q1456. The Helicase C-terminal 2 domain occupies P1544–D1752. The SEC63 2 domain maps to P1811–I2128.

This sequence belongs to the helicase family. SKI2 subfamily.

Its subcellular location is the nucleus. The catalysed reaction is ATP + H2O = ADP + phosphate + H(+). Functionally, catalyzes the ATP-dependent unwinding of U4/U6 RNA duplices, an essential step in the assembly of a catalytically active spliceosome. Plays a role in pre-mRNA splicing. The polypeptide is U5 small nuclear ribonucleoprotein 200 kDa helicase (Drosophila melanogaster (Fruit fly)).